A 534-amino-acid chain; its full sequence is Lysophosphatidylcholine acyltransferase 1 (534 aa).

The interval 1 to 25 is disordered; that stretch reads MRLRGRGPRAAPSSSSGAGDARRLA. Residues 1–57 lie on the Cytoplasmic side of the membrane; sequence MRLRGRGPRAAPSSSSGAGDARRLAPPGRNPFVHELRLSALQKAQVAFMTLTLFPIR. The span at 8 to 19 shows a compositional bias: low complexity; sequence PRAAPSSSSGAG. Residues 58 to 78 form a helical; Signal-anchor for type II membrane protein membrane-spanning segment; that stretch reads LLFAAFMMLLAWPFALVASLG. Residues 79-534 lie on the Lumenal side of the membrane; sequence PPDKEPEQPL…GRKNSCKKVD (456 aa). The HXXXXD motif motif lies at 135–140; the sequence is HSSYFD. 2 consecutive EF-hand domains span residues 379–414 and 451–486; these read PVSD…VCRP and ISEL…YPDF. 4 residues coordinate Ca(2+): Asp-392, Ser-394, Glu-398, and Glu-403. The Di-lysine motif signature appears at 531-534; that stretch reads KKVD.

This sequence belongs to the 1-acyl-sn-glycerol-3-phosphate acyltransferase family. In terms of tissue distribution, enriched in alveolar type II cells of lung. Also highly expressed in stomach.

Its subcellular location is the endoplasmic reticulum membrane. The protein resides in the golgi apparatus membrane. The protein localises to the cell membrane. It localises to the lipid droplet. The catalysed reaction is a 1-acyl-sn-glycero-3-phosphocholine + an acyl-CoA = a 1,2-diacyl-sn-glycero-3-phosphocholine + CoA. It carries out the reaction a 1-O-alkyl-sn-glycero-3-phosphocholine + acetyl-CoA = a 1-O-alkyl-2-acetyl-sn-glycero-3-phosphocholine + CoA. The enzyme catalyses a 1-acyl-sn-glycero-3-phosphate + an acyl-CoA = a 1,2-diacyl-sn-glycero-3-phosphate + CoA. It catalyses the reaction a 1-O-(1Z-alkenyl)-sn-glycero-3-phosphocholine + an acyl-CoA = a 1-O-(1Z-alkenyl)-2-acyl-sn-glycero-3-phosphocholine + CoA. The catalysed reaction is 1-acyl-sn-glycero-3-phospho-(1'-sn-glycerol) + an acyl-CoA = a 1,2-diacyl-sn-glycero-3-phospho-(1'-sn-glycerol) + CoA. It carries out the reaction a 1-acyl-sn-glycero-3-phosphocholine + hexadecanoyl-CoA = 1-acyl-2-hexadecanoyl-sn-glycero-3-phosphocholine + CoA. The enzyme catalyses a 1-acyl-sn-glycero-3-phosphate + hexadecanoyl-CoA = 1-acyl-2-hexadecanoyl-sn-glycero-3-phosphate + CoA. It catalyses the reaction 1-acyl-sn-glycero-3-phospho-(1'-sn-glycerol) + hexadecanoyl-CoA = 1-acyl-2-hexadecanoyl-sn-glycero-3-phospho-(1'-sn-glycerol) + CoA. The catalysed reaction is 1-hexadecanoyl-sn-glycero-3-phosphocholine + hexadecanoyl-CoA = 1,2-dihexadecanoyl-sn-glycero-3-phosphocholine + CoA. It carries out the reaction 1-O-hexadecyl-sn-glycero-3-phosphocholine + hexadecanoyl-CoA = 1-O-hexadecyl-2-hexadecanoyl-sn-glycero-3-phosphocholine + CoA. The enzyme catalyses a 1-O-(1Z-alkenyl)-sn-glycero-3-phosphocholine + hexadecanoyl-CoA = 1-O-(1Z)-alkenyl-2-hexadecanoyl-sn-glycero-3-phosphocholine + CoA. It catalyses the reaction 1-hexadecanoyl-sn-glycero-3-phospho-(1'-sn-glycerol) + hexadecanoyl-CoA = 1,2-dihexadecanoyl-sn-glycero-3-phospho-(1'-sn-glycerol) + CoA. The catalysed reaction is 1-dodecanoyl-sn-glycero-3-phosphocholine + hexadecanoyl-CoA = 1-dodecanoyl-2-hexadecanoyl-sn-glycero-3-phosphocholine + CoA. It carries out the reaction 1-tetradecanoyl-sn-glycero-3-phosphocholine + hexadecanoyl-CoA = 1-tetradecanoyl-2-hexadecanoyl-sn-glycero-3-phosphocholine + CoA. The enzyme catalyses 1-O-octadecyl-sn-glycero-3-phosphocholine + hexadecanoyl-CoA = 1-O-octadecyl-2-hexadecanoyl-sn-glycero-3-phosphocholine + CoA. It catalyses the reaction 1-octadecanoyl-sn-glycero-3-phosphocholine + hexadecanoyl-CoA = 1-octadecanoyl-2-hexadecanoyl-sn-glycero-3-phosphocholine + CoA. The catalysed reaction is 1-(9Z-octadecenoyl)-sn-glycero-3-phosphocholine + hexadecanoyl-CoA = 1-(9Z-octadecenoyl)-2-hexadecanoyl-sn-glycero-3-phosphocholine + CoA. It carries out the reaction 1-eicosanoyl-sn-glycero-3-phosphocholine + hexadecanoyl-CoA = 1-eicosanoyl-2-hexadecanoyl-sn-glycero-3-phosphocholine + CoA. The enzyme catalyses hexanoyl-CoA + 1-hexadecanoyl-sn-glycero-3-phosphocholine = 1-hexadecanoyl-2-hexanoyl-sn-glycero-3-phosphocholine + CoA. It catalyses the reaction octanoyl-CoA + 1-hexadecanoyl-sn-glycero-3-phosphocholine = 1-hexadecanoyl-2-octanoyl-sn-glycero-3-phosphocholine + CoA. The catalysed reaction is decanoyl-CoA + 1-hexadecanoyl-sn-glycero-3-phosphocholine = 1-hexadecanoyl-2-decanoyl-sn-glycero-3-phosphocholine + CoA. It carries out the reaction dodecanoyl-CoA + 1-hexadecanoyl-sn-glycero-3-phosphocholine = 1-hexadecanoyl-2-dodecanoyl-sn-glycero-3-phosphocholine + CoA. The enzyme catalyses tetradecanoyl-CoA + 1-hexadecanoyl-sn-glycero-3-phosphocholine = 1-hexadecanoyl-2-tetradecanoyl-sn-glycero-3-phosphocholine + CoA. It catalyses the reaction 1-hexadecanoyl-sn-glycero-3-phosphocholine + (9Z)-octadecenoyl-CoA = 1-hexadecanoyl-2-(9Z-octadecenoyl)-sn-glycero-3-phosphocholine + CoA. The catalysed reaction is (9Z,12Z)-octadecadienoyl-CoA + 1-hexadecanoyl-sn-glycero-3-phosphocholine = 1-hexadecanoyl-2-(9Z,12Z-octadecadienoyl)-sn-glycero-3-phosphocholine + CoA. It carries out the reaction (4Z,7Z,10Z,13Z,16Z,19Z)-docosahexaenoyl-CoA + 1-hexadecanoyl-sn-glycero-3-phosphocholine = 1-hexadecanoyl-2-(4Z,7Z,10Z,13Z,16Z,19Z-docosahexaenoyl)-sn-glycero-3-phosphocholine + CoA. The enzyme catalyses 1-hexadecanoyl-sn-glycero-3-phosphocholine + acetyl-CoA = 1-hexadecanoyl-2-acetyl-sn-glycero-3-phosphocholine + CoA. It catalyses the reaction eicosanoyl-CoA + 1-hexadecanoyl-sn-glycero-3-phosphocholine = 1-hexadecanoyl-2-eicosanoyl-sn-glycero-3-phosphocholine + CoA. The catalysed reaction is 1-O-hexadecyl-sn-glycero-3-phosphocholine + acetyl-CoA = 1-O-hexadecyl-2-acetyl-sn-glycero-3-phosphocholine + CoA. It functions in the pathway lipid metabolism; phospholipid metabolism. Activity is stimulated by Mg(2+) or Mn(2+). In terms of biological role, exhibits acyltransferase activity. Exhibits acetyltransferase activity. Activity is calcium-independent. Catalyzes the conversion of lysophosphatidylcholine (1-acyl-sn-glycero-3-phosphocholine or LPC) into phosphatidylcholine (1,2-diacyl-sn-glycero-3-phosphocholine or PC). Catalyzes the conversion 1-acyl-sn-glycerol-3-phosphate (lysophosphatidic acid or LPA) into 1,2-diacyl-sn-glycerol-3-phosphate (phosphatidic acid or PA) by incorporating an acyl moiety at the sn-2 position of the glycerol backbone. Displays a clear preference for saturated fatty acyl-CoAs, and 1-myristoyl or 1-palmitoyl LPC as acyl donors and acceptors, respectively. Involved in platelet-activating factor (PAF) biosynthesis by catalyzing the conversion of the PAF precursor, 1-O-alkyl-sn-glycero-3-phosphocholine (lyso-PAF) into 1-O-alkyl-2-acetyl-sn-glycero-3-phosphocholine (PAF). May synthesize phosphatidylcholine in pulmonary surfactant, thereby playing a pivotal role in respiratory physiology. Involved in the regulation of lipid droplet number and size. This Rattus norvegicus (Rat) protein is Lysophosphatidylcholine acyltransferase 1 (Lpcat1).